We begin with the raw amino-acid sequence, 318 residues long: Olfactory receptor 52D1 (318 aa).

The Extracellular portion of the chain corresponds to 1 to 28; that stretch reads MSDSNLSDNHLPDTFFLTGIPGLEAAHF. Residue N5 is glycosylated (N-linked (GlcNAc...) asparagine). Residues 29-49 form a helical membrane-spanning segment; it reads WIAIPFCAMYLVALVGNAALI. The Cytoplasmic segment spans residues 50 to 57; sequence LVIAMDNA. Residues 58-78 traverse the membrane as a helical segment; that stretch reads LHAPMYLFLCLLSLTDLALSS. Residues 79-102 are Extracellular-facing; it reads TTVPKMLAILWLHAGEISFGGCLA. A disulfide bridge connects residues C100 and C192. The chain crosses the membrane as a helical span at residues 103 to 123; it reads QMFCVHSIYALESSILLAMAF. Residues 124–142 lie on the Cytoplasmic side of the membrane; that stretch reads DRYVAICNPLRYTTILNHA. The chain crosses the membrane as a helical span at residues 143 to 163; sequence VIGRIGFVGLFRSVAIVSPFI. The Extracellular portion of the chain corresponds to 164–199; sequence FLLRRLPYCGHRVMTHTYCEHMGIARLACANITVNI. Residues 200–220 traverse the membrane as a helical segment; it reads VYGLTVALLAMGLDSILIAIS. Residues 221-240 lie on the Cytoplasmic side of the membrane; sequence YGFILHAVFHLPSHDAQHKA. Residues 241–261 form a helical membrane-spanning segment; sequence LSTCGSHIGIILVFYIPAFFS. Residues 262–277 lie on the Extracellular side of the membrane; sequence FLTHRFGHHEVPKHVH. A helical membrane pass occupies residues 278–298; the sequence is IFLANLYVLVPPVLNPILYGA. Residues 299–318 lie on the Cytoplasmic side of the membrane; the sequence is RTKEIRSRLLKLLHLGKTSI.

This sequence belongs to the G-protein coupled receptor 1 family.

It is found in the cell membrane. In terms of biological role, odorant receptor. This chain is Olfactory receptor 52D1 (OR52D1), found in Homo sapiens (Human).